Here is a 285-residue protein sequence, read N- to C-terminus: Inhibitor of growth protein 5 (285 aa).

Positions 116-225 (EKASSTRAKS…ATHPSDVMDM (110 aa)) are disordered. Residues 131-149 (KKGRKKTKDSKTTGKKKKS) show a composition bias toward basic residues. Low complexity predominate over residues 160-178 (NNQSNANSSVNSSSNAGQG). A PHD-type zinc finger spans residues 232-281 (PTYCLCHQVSYGEMIGCDNPDCPIEWFHFACVGLTTKPKGKWFCPKCTQD). Residues Cys235, Cys237, Cys248, Cys253, His259, Cys262, Cys275, and Cys278 each contribute to the Zn(2+) site.

This sequence belongs to the ING family. Component of the Enok complex composed of at least Br140, enok, Eaf6 and Ing5.

It is found in the nucleus. It localises to the chromosome. Functionally, component of the Enok complex which has a histone H3 acetyltransferase activity. The protein is Inhibitor of growth protein 5 of Drosophila melanogaster (Fruit fly).